A 219-amino-acid chain; its full sequence is Chloramphenicol acetyltransferase (219 aa).

The Proton acceptor role is filled by histidine 190.

It belongs to the chloramphenicol acetyltransferase family. In terms of assembly, homotrimer.

The catalysed reaction is chloramphenicol + acetyl-CoA = chloramphenicol 3-acetate + CoA. This enzyme is an effector of chloramphenicol resistance in bacteria. This Clostridium butyricum protein is Chloramphenicol acetyltransferase (catB).